The sequence spans 380 residues: MTEFTKLRWLLSAAGLVMYVADVCTDAALVLTYFKEKHVVCAALTLLFIVVGLLVTQVFSTAWYWDDMDCDEKREDMKTTLPVVSKRGLATLHLFGVGIFIRYYQMLKRGFGVAWGTVEPVEEIKNQQHFLFGLAADLSMLRLLEAFLESVPQLLLQLYIVLGQQECSLVQLVGMSFSFMNAAWALVDYRRCLRRSLPDVRQMPRGLPTAIYLLYKLFTITSRVLGYALLLIFSIYSTVGLAIVWLLGTAWTHRLHTDFCSSQSLEFLYRAIVGVILTFTFFNVKGQGTRDAMITYYFLHSLINVLSLLLLFVLRPDLLTLAALLCVSTLMAACSVLGLVCLVLYYLLLHPTEACREADEVDGLEIKTRSKGRLRDFLYP.

The next 8 membrane-spanning stretches (helical) occupy residues 10–30, 39–59, 81–101, 167–187, 228–248, 264–284, 294–314, and 329–349; these read LLSA…AALV, VVCA…TQVF, LPVV…GIFI, CSLV…WALV, ALLL…WLLG, SLEF…FFNV, ITYY…LFVL, and TLMA…YLLL.

Belongs to the XK family.

Its subcellular location is the cell membrane. The enzyme catalyses a 1,2-diacyl-sn-glycero-3-phospho-L-serine(in) = a 1,2-diacyl-sn-glycero-3-phospho-L-serine(out). Its function is as follows. Phospholipid scramblase that promotes phosphatidylserine exposure on apoptotic cell surface. Phosphatidylserine is a specific marker only present at the surface of apoptotic cells and acts as a specific signal for engulfment. The chain is XK-related protein 9 from Tetraodon nigroviridis (Spotted green pufferfish).